The following is a 138-amino-acid chain: Small ribosomal subunit protein uS11c (138 aa).

The interval 1-21 is disordered; it reads MAKSISKIGSRKNARIGSRKQ. Basic residues predominate over residues 9 to 21; sequence GSRKNARIGSRKQ.

Belongs to the universal ribosomal protein uS11 family. Part of the 30S ribosomal subunit.

The protein resides in the plastid. It localises to the chloroplast. The protein is Small ribosomal subunit protein uS11c of Cicer arietinum (Chickpea).